The following is a 362-amino-acid chain: Fructose-bisphosphate aldolase (362 aa).

Ser-65 provides a ligand contact to D-glyceraldehyde 3-phosphate. Asp-112 serves as the catalytic Proton donor. His-113, Asp-147, Glu-177, and His-229 together coordinate Zn(2+). Residue Gly-230 participates in dihydroxyacetone phosphate binding. Residue His-268 coordinates Zn(2+). Residues Gly-269 to Ser-271 and Asn-290 to Thr-293 contribute to the dihydroxyacetone phosphate site.

The protein belongs to the class II fructose-bisphosphate aldolase family. As to quaternary structure, homodimer. Zn(2+) is required as a cofactor.

The enzyme catalyses beta-D-fructose 1,6-bisphosphate = D-glyceraldehyde 3-phosphate + dihydroxyacetone phosphate. It functions in the pathway carbohydrate degradation; glycolysis; D-glyceraldehyde 3-phosphate and glycerone phosphate from D-glucose: step 4/4. Functionally, catalyzes the aldol condensation of dihydroxyacetone phosphate (DHAP or glycerone-phosphate) with glyceraldehyde 3-phosphate (G3P) to form fructose 1,6-bisphosphate (FBP) in gluconeogenesis and the reverse reaction in glycolysis. In Aspergillus oryzae (strain ATCC 42149 / RIB 40) (Yellow koji mold), this protein is Fructose-bisphosphate aldolase (fbaA).